A 101-amino-acid polypeptide reads, in one-letter code: Small ribosomal subunit protein uS14 (101 aa).

This sequence belongs to the universal ribosomal protein uS14 family. In terms of assembly, part of the 30S ribosomal subunit. Contacts proteins S3 and S10.

Its function is as follows. Binds 16S rRNA, required for the assembly of 30S particles and may also be responsible for determining the conformation of the 16S rRNA at the A site. The polypeptide is Small ribosomal subunit protein uS14 (Chlamydia pneumoniae (Chlamydophila pneumoniae)).